The following is a 422-amino-acid chain: Enolase (422 aa).

Gln-163 contacts (2R)-2-phosphoglycerate. The active-site Proton donor is the Glu-205. Positions 242, 283, and 310 each coordinate Mg(2+). Lys-335, Arg-364, Ser-365, and Lys-386 together coordinate (2R)-2-phosphoglycerate. Lys-335 serves as the catalytic Proton acceptor.

This sequence belongs to the enolase family. Mg(2+) is required as a cofactor.

Its subcellular location is the cytoplasm. It localises to the secreted. The protein resides in the cell surface. The enzyme catalyses (2R)-2-phosphoglycerate = phosphoenolpyruvate + H2O. Its pathway is carbohydrate degradation; glycolysis; pyruvate from D-glyceraldehyde 3-phosphate: step 4/5. Its function is as follows. Catalyzes the reversible conversion of 2-phosphoglycerate (2-PG) into phosphoenolpyruvate (PEP). It is essential for the degradation of carbohydrates via glycolysis. The sequence is that of Enolase from Bdellovibrio bacteriovorus (strain ATCC 15356 / DSM 50701 / NCIMB 9529 / HD100).